The sequence spans 317 residues: Acetyl-coenzyme A carboxylase carboxyl transferase subunit alpha (317 aa).

One can recognise a CoA carboxyltransferase C-terminal domain in the interval 37–292 (RLEKKAEKLR…RICLKKHLDD (256 aa)).

This sequence belongs to the AccA family. In terms of assembly, acetyl-CoA carboxylase is a heterohexamer composed of biotin carboxyl carrier protein (AccB), biotin carboxylase (AccC) and two subunits each of ACCase subunit alpha (AccA) and ACCase subunit beta (AccD).

The protein resides in the cytoplasm. It carries out the reaction N(6)-carboxybiotinyl-L-lysyl-[protein] + acetyl-CoA = N(6)-biotinyl-L-lysyl-[protein] + malonyl-CoA. Its pathway is lipid metabolism; malonyl-CoA biosynthesis; malonyl-CoA from acetyl-CoA: step 1/1. Functionally, component of the acetyl coenzyme A carboxylase (ACC) complex. First, biotin carboxylase catalyzes the carboxylation of biotin on its carrier protein (BCCP) and then the CO(2) group is transferred by the carboxyltransferase to acetyl-CoA to form malonyl-CoA. The sequence is that of Acetyl-coenzyme A carboxylase carboxyl transferase subunit alpha from Syntrophotalea carbinolica (strain DSM 2380 / NBRC 103641 / GraBd1) (Pelobacter carbinolicus).